Consider the following 165-residue polypeptide: Nucleotide-binding protein RoseRS_0530 (165 aa).

It belongs to the YajQ family.

Functionally, nucleotide-binding protein. The protein is Nucleotide-binding protein RoseRS_0530 of Roseiflexus sp. (strain RS-1).